The sequence spans 569 residues: Membrane protein insertase YidC (569 aa).

A helical membrane pass occupies residues 6-26 (FVLFLIFATSLLFLWDAWQKE). Polar residues-rich tracts occupy residues 32-52 (QGPK…TAGT) and 62-74 (LASS…STAE). The interval 32-81 (QGPKTAVQGTETQANTGTAGTAETPVPGDQLASSVPQRGSTAENGAPVRA) is disordered. 5 helical membrane-spanning segments follow: residues 348-368 (VVDY…LSLF), 375-395 (WGVA…PLSA), 442-462 (GGCL…WVLL), 479-499 (LSAP…MFLQ), and 519-539 (PLAF…YSLV).

Belongs to the OXA1/ALB3/YidC family. Type 1 subfamily. As to quaternary structure, interacts with the Sec translocase complex via SecD. Specifically interacts with transmembrane segments of nascent integral membrane proteins during membrane integration.

The protein resides in the cell inner membrane. Its function is as follows. Required for the insertion and/or proper folding and/or complex formation of integral membrane proteins into the membrane. Involved in integration of membrane proteins that insert both dependently and independently of the Sec translocase complex, as well as at least some lipoproteins. Aids folding of multispanning membrane proteins. The chain is Membrane protein insertase YidC from Nitrosospira multiformis (strain ATCC 25196 / NCIMB 11849 / C 71).